Consider the following 671-residue polypeptide: DNA ligase (671 aa).

Residues 32–36, 81–82, and glutamate 113 each bind NAD(+); these read DAEYD and SL. Lysine 115 serves as the catalytic N6-AMP-lysine intermediate. 4 residues coordinate NAD(+): arginine 136, glutamate 173, lysine 290, and lysine 314. The Zn(2+) site is built by cysteine 408, cysteine 411, cysteine 426, and cysteine 432. One can recognise a BRCT domain in the interval 593–671; that stretch reads EIDSPFAGKT…EAEMIRLLGA (79 aa).

The protein belongs to the NAD-dependent DNA ligase family. LigA subfamily. The cofactor is Mg(2+). Requires Mn(2+) as cofactor.

It catalyses the reaction NAD(+) + (deoxyribonucleotide)n-3'-hydroxyl + 5'-phospho-(deoxyribonucleotide)m = (deoxyribonucleotide)n+m + AMP + beta-nicotinamide D-nucleotide.. In terms of biological role, DNA ligase that catalyzes the formation of phosphodiester linkages between 5'-phosphoryl and 3'-hydroxyl groups in double-stranded DNA using NAD as a coenzyme and as the energy source for the reaction. It is essential for DNA replication and repair of damaged DNA. The protein is DNA ligase of Salmonella typhimurium (strain LT2 / SGSC1412 / ATCC 700720).